A 228-amino-acid polypeptide reads, in one-letter code: ATP synthase subunit a 2 (228 aa).

A run of 6 helical transmembrane segments spans residues 16–36 (VGTT…GAWL), 74–94 (VFPF…SSLI), 103–123 (DLSA…WFGI), 139–159 (SPFL…ALAV), 173–193 (LLVL…LHIV), and 194–214 (EALV…AGAI).

This sequence belongs to the ATPase A chain family. In terms of assembly, F-type ATPases have 2 components, CF(1) - the catalytic core - and CF(0) - the membrane proton channel. CF(1) has five subunits: alpha(3), beta(3), gamma(1), delta(1), epsilon(1). CF(0) has three main subunits: a(1), b(2) and c(9-12). The alpha and beta chains form an alternating ring which encloses part of the gamma chain. CF(1) is attached to CF(0) by a central stalk formed by the gamma and epsilon chains, while a peripheral stalk is formed by the delta and b chains.

The protein resides in the cell inner membrane. In terms of biological role, key component of the proton channel; it plays a direct role in the translocation of protons across the membrane. The chain is ATP synthase subunit a 2 from Pelobacter propionicus (strain DSM 2379 / NBRC 103807 / OttBd1).